The following is a 419-amino-acid chain: UDP-N-acetylglucosamine 1-carboxyvinyltransferase (419 aa).

Position 22-23 (22-23 (KN)) interacts with phosphoenolpyruvate. Arg91 lines the UDP-N-acetyl-alpha-D-glucosamine pocket. Cys115 acts as the Proton donor in catalysis. 2-(S-cysteinyl)pyruvic acid O-phosphothioketal is present on Cys115. UDP-N-acetyl-alpha-D-glucosamine contacts are provided by residues 120 to 124 (RPVDL), 160 to 163 (KVSV), Asp305, and Val327.

It belongs to the EPSP synthase family. MurA subfamily.

It is found in the cytoplasm. It carries out the reaction phosphoenolpyruvate + UDP-N-acetyl-alpha-D-glucosamine = UDP-N-acetyl-3-O-(1-carboxyvinyl)-alpha-D-glucosamine + phosphate. It participates in cell wall biogenesis; peptidoglycan biosynthesis. Functionally, cell wall formation. Adds enolpyruvyl to UDP-N-acetylglucosamine. This is UDP-N-acetylglucosamine 1-carboxyvinyltransferase from Shigella dysenteriae serotype 1 (strain Sd197).